The chain runs to 122 residues: Large ribosomal subunit protein uL14 (122 aa).

Belongs to the universal ribosomal protein uL14 family. In terms of assembly, part of the 50S ribosomal subunit. Forms a cluster with proteins L3 and L19. In the 70S ribosome, L14 and L19 interact and together make contacts with the 16S rRNA in bridges B5 and B8.

Functionally, binds to 23S rRNA. Forms part of two intersubunit bridges in the 70S ribosome. The protein is Large ribosomal subunit protein uL14 of Desulforamulus reducens (strain ATCC BAA-1160 / DSM 100696 / MI-1) (Desulfotomaculum reducens).